Consider the following 266-residue polypeptide: Lectin 7 (266 aa).

The first 27 residues, 1–27 (MAINTSRTQILFITIISFLILAQNVNS), serve as a signal peptide directing secretion. N-linked (GlcNAc...) asparagine glycans are attached at residues N121, N205, and N219.

The protein belongs to the leguminous lectin family.

In terms of biological role, may be involved in arbuscular mycorrhizal (AM) symbiosis with AM fungi. The sequence is that of Lectin 7 from Medicago truncatula (Barrel medic).